The primary structure comprises 468 residues: Glutamate--tRNA ligase (468 aa).

A 'HIGH' region motif is present at residues 14 to 24 (PSPTGFIHLGN). Positions 246–250 (KMSKR) match the 'KMSKS' region motif. K249 contacts ATP.

Belongs to the class-I aminoacyl-tRNA synthetase family. Glutamate--tRNA ligase type 1 subfamily. Monomer.

The protein resides in the cytoplasm. It carries out the reaction tRNA(Glu) + L-glutamate + ATP = L-glutamyl-tRNA(Glu) + AMP + diphosphate. Functionally, catalyzes the attachment of glutamate to tRNA(Glu) in a two-step reaction: glutamate is first activated by ATP to form Glu-AMP and then transferred to the acceptor end of tRNA(Glu). The polypeptide is Glutamate--tRNA ligase (Leptothrix cholodnii (strain ATCC 51168 / LMG 8142 / SP-6) (Leptothrix discophora (strain SP-6))).